The sequence spans 88 residues: MINNLSISSSLIPDKQRGSVESQVFYLTNRVLRLTQHLQLHGRDYSSQRGLWKILSKRKQLLVYLSKRDKLRYDDLIGQLGIRGLKTR.

This sequence belongs to the universal ribosomal protein uS15 family. In terms of assembly, part of the 30S ribosomal subunit.

It is found in the plastid. The protein resides in the chloroplast. The protein is Small ribosomal subunit protein uS15c (rps15) of Pinus thunbergii (Japanese black pine).